The chain runs to 199 residues: Recombination protein RecR (199 aa).

The C4-type zinc-finger motif lies at 58–73 (CSVCFTLSDTPVCAIC). Residues 81 to 176 (SLLCVVEGPT…TVTRIASGMP (96 aa)) enclose the Toprim domain.

Belongs to the RecR family.

In terms of biological role, may play a role in DNA repair. It seems to be involved in an RecBC-independent recombinational process of DNA repair. It may act with RecF and RecO. This chain is Recombination protein RecR, found in Desulfosudis oleivorans (strain DSM 6200 / JCM 39069 / Hxd3) (Desulfococcus oleovorans).